The chain runs to 314 residues: Methionyl-tRNA formyltransferase (314 aa).

(6S)-5,6,7,8-tetrahydrofolate is bound at residue 110–113; sequence SLLP.

The protein belongs to the Fmt family.

It catalyses the reaction L-methionyl-tRNA(fMet) + (6R)-10-formyltetrahydrofolate = N-formyl-L-methionyl-tRNA(fMet) + (6S)-5,6,7,8-tetrahydrofolate + H(+). Functionally, attaches a formyl group to the free amino group of methionyl-tRNA(fMet). The formyl group appears to play a dual role in the initiator identity of N-formylmethionyl-tRNA by promoting its recognition by IF2 and preventing the misappropriation of this tRNA by the elongation apparatus. This chain is Methionyl-tRNA formyltransferase, found in Bacillus cereus (strain AH187).